Reading from the N-terminus, the 164-residue chain is ATP synthase subunit b (164 aa).

Residues 10–32 (AVAFVLFFVLFGKKLWTPLAAAL) traverse the membrane as a helical segment.

Belongs to the ATPase B chain family. F-type ATPases have 2 components, F(1) - the catalytic core - and F(0) - the membrane proton channel. F(1) has five subunits: alpha(3), beta(3), gamma(1), delta(1), epsilon(1). F(0) has three main subunits: a(1), b(2) and c(10-14). The alpha and beta chains form an alternating ring which encloses part of the gamma chain. F(1) is attached to F(0) by a central stalk formed by the gamma and epsilon chains, while a peripheral stalk is formed by the delta and b chains.

The protein localises to the cell inner membrane. In terms of biological role, f(1)F(0) ATP synthase produces ATP from ADP in the presence of a proton or sodium gradient. F-type ATPases consist of two structural domains, F(1) containing the extramembraneous catalytic core and F(0) containing the membrane proton channel, linked together by a central stalk and a peripheral stalk. During catalysis, ATP synthesis in the catalytic domain of F(1) is coupled via a rotary mechanism of the central stalk subunits to proton translocation. Functionally, component of the F(0) channel, it forms part of the peripheral stalk, linking F(1) to F(0). This chain is ATP synthase subunit b, found in Gluconacetobacter diazotrophicus (strain ATCC 49037 / DSM 5601 / CCUG 37298 / CIP 103539 / LMG 7603 / PAl5).